The sequence spans 134 residues: Lymphocyte antigen 6G (134 aa).

A signal peptide spans 1–26 (MDTCHIAKSCVLILLVVLLCAERAQG). One can recognise a UPAR/Ly6 domain in the interval 27 to 118 (LECYNCIGVP…PTGGSSWTMA (92 aa)). Disulfide bonds link Cys29/Cys53, Cys32/Cys41, Cys46/Cys74, Cys78/Cys98, and Cys99/Cys104. A lipid anchor (GPI-anchor amidated asparagine) is attached at Asn105. The propeptide at 106–134 (AAVPTGGSSWTMAGVLLFSLVSVLLQTFL) is removed in mature form.

Expressed in bone marrow.

The protein localises to the cell membrane. The polypeptide is Lymphocyte antigen 6G (Ly6g) (Mus musculus (Mouse)).